The primary structure comprises 121 residues: Phosphoribosyl-ATP pyrophosphatase (121 aa).

It belongs to the PRA-PH family.

It is found in the cytoplasm. The enzyme catalyses 1-(5-phospho-beta-D-ribosyl)-ATP + H2O = 1-(5-phospho-beta-D-ribosyl)-5'-AMP + diphosphate + H(+). It participates in amino-acid biosynthesis; L-histidine biosynthesis; L-histidine from 5-phospho-alpha-D-ribose 1-diphosphate: step 2/9. This Burkholderia multivorans (strain ATCC 17616 / 249) protein is Phosphoribosyl-ATP pyrophosphatase.